Consider the following 1086-residue polypeptide: MAHLLKTVVAGCSCPFLSNLGSSKVLPGKRDFVRTLRTHQALWCKSPVKPGIPYKQLTVGVPKEIFQNEKRVALSPAGVQALVKQGFNVVVESGAGEASKFPDDLYRAAGAQIQGMKEVLASDLVVKVRAPMVNPTLGAHEADFLKPSGTLISFIYPAQNPDLLNKLSERKTTVLAMDQVPRVTIAQGYDALSSMANISGYKAVVLAANHFGRFFTGQITAAGKVPPAKILIVGGGVAGLASAGAAKSMGAVVRGFDTRAAALEQFKSLGAEPLEVDLKESGEGQGGYAKEMSKEFIEAEMKLFAQQCKEVDILISTALIPGKKAPVLFSKEMIESMKEGSVVVDLAAEAGGNFETTKPGELYVHKGITHIGYTDLPSRMATQASTLYSNNITKLLKAISPDKDNFHFEVKDDFDFGTMSHVIRGTVVMKDGKVIFPAPTPKNIPEEAPVKPKTVAELEAEKAGTVSMYTKTLTTASVYSAGLTGMLGLGIVAPNVAFSQMVTTFGLAGIIGYHTVWGVTPALHSPLMSVTNAISGLTAVGGLALMGGHFYPSTTSQSLAALATFISSVNIAGGFLVTQRMLDMFKRPTDPPEYNYLYLLPGGTFVGGYLAALYGGYNIEEIMYLGSGLCCVGALGGLSTQGTARLGNALGMIGVAGGLAATLGGLKPDPQLLAQMSGAMAMGGTIGLTIAKRIQISDLPQLVAAFHSLVGLAAVLTCMAEYIVEYPHFAMDATSNFTKIVAYLGTYIGGVTFSGSLVAYGKLQGILKSAPLLLPGRHALNAGLLAASVGGIIPFMADPSFTTGITCLGSVSGLSTLMGVTLTAAIGGADMPVVITVLNSYSGWALCAEGFLLNNNLLTIVGALIGSSGAILSYIMCVAMNRSLANVILGGYGTTSTAGGKPMEISGTHTEINLDNAVEMIREANSIVITPGYGLCAAKAQYPIADLVKMLTEQGKKVRFGIHPVAGRMPGQLNVLLAEAGVPYDIVLEMDEINSDFPDTDLVLVIGANDTVNSAAQEDPNSIIAGMPVLEVWKSKQVIVMKRSLGVGYAAVDNPIFYKPNTAMLLGDAKKTCDALQAKVRESYQK.

The N-terminal 43 residues, 1-43 (MAHLLKTVVAGCSCPFLSNLGSSKVLPGKRDFVRTLRTHQALW), are a transit peptide targeting the mitochondrion. Over 44–474 (CKSPVKPGIP…TVSMYTKTLT (431 aa)) the chain is Mitochondrial matrix. At Lys-70 the chain carries N6-acetyllysine. Lys-117 is modified (N6-succinyllysine). 182–184 (RVT) lines the NAD(+) pocket. The residue at position 224 (Lys-224) is an N6-succinyllysine. Residues Val-237, 257–259 (DTR), and Gly-287 each bind NAD(+). Lys-294 is subject to N6-succinyllysine. NAD(+) is bound by residues Glu-300 and Leu-319. The residue at position 331 (Lys-331) is an N6-succinyllysine. Lys-397 bears the N6-acetyllysine mark. A run of 4 helical transmembrane segments spans residues 475-493 (TASVYSAGLTGMLGLGIVA), 501-521 (MVTTFGLAGIIGYHTVWGVTP), 527-546 (LMSVTNAISGLTAVGGLALM), and 558-578 (SLAALATFISSVNIAGGFLVT). Residues 579-595 (QRMLDMFKRPTDPPEYN) are Mitochondrial matrix-facing. Helical transmembrane passes span 596 to 616 (YLYLLPGGTFVGGYLAALYGG), 622 to 642 (IMYLGSGLCCVGALGGLSTQG), 646 to 666 (LGNALGMIGVAGGLAATLGGL), 672 to 691 (LLAQMSGAMAMGGTIGLTIA), and 702 to 722 (LVAAFHSLVGLAAVLTCMAEY). Residues 723–739 (IVEYPHFAMDATSNFTK) are Cytoplasmic-facing. 5 helical membrane-spanning segments follow: residues 740-760 (IVAYLGTYIGGVTFSGSLVAY), 778-797 (HALNAGLLAASVGGIIPFMA), 801-819 (FTTGITCLGSVSGLSTLMG), 833-853 (VVITVLNSYSGWALCAEGFLL), and 857-879 (LLTIVGALIGSSGAILSYIMCVA). At 880–1086 (MNRSLANVIL…QAKVRESYQK (207 aa)) the chain is on the mitochondrial matrix side. NADP(+) is bound by residues Tyr-933, 965 to 970 (VAGRMP), 1007 to 1011 (GANDT), 1026 to 1027 (GM), 1042 to 1049 (KRSLGVGY), and 1068 to 1069 (DA). Position 1079 is an N6-succinyllysine (Lys-1079).

In the N-terminal section; belongs to the AlaDH/PNT family. It in the C-terminal section; belongs to the PNT beta subunit family. Homodimer. Widely expressed with expression most readily detectable in adrenal, heart, kidney, thyroid and adipose tissues.

It localises to the mitochondrion inner membrane. It carries out the reaction NAD(+) + NADPH + H(+)(in) = NADH + NADP(+) + H(+)(out). Its function is as follows. The transhydrogenation between NADH and NADP is coupled to respiration and ATP hydrolysis and functions as a proton pump across the membrane. May play a role in reactive oxygen species (ROS) detoxification in the adrenal gland. This chain is NAD(P) transhydrogenase, mitochondrial (Nnt), found in Mus musculus (Mouse).